A 252-amino-acid polypeptide reads, in one-letter code: Imidazole glycerol phosphate synthase subunit HisF (252 aa).

Catalysis depends on residues Asp-11 and Asp-130.

Belongs to the HisA/HisF family. Heterodimer of HisH and HisF.

The protein localises to the cytoplasm. The enzyme catalyses 5-[(5-phospho-1-deoxy-D-ribulos-1-ylimino)methylamino]-1-(5-phospho-beta-D-ribosyl)imidazole-4-carboxamide + L-glutamine = D-erythro-1-(imidazol-4-yl)glycerol 3-phosphate + 5-amino-1-(5-phospho-beta-D-ribosyl)imidazole-4-carboxamide + L-glutamate + H(+). It functions in the pathway amino-acid biosynthesis; L-histidine biosynthesis; L-histidine from 5-phospho-alpha-D-ribose 1-diphosphate: step 5/9. Functionally, IGPS catalyzes the conversion of PRFAR and glutamine to IGP, AICAR and glutamate. The HisF subunit catalyzes the cyclization activity that produces IGP and AICAR from PRFAR using the ammonia provided by the HisH subunit. This chain is Imidazole glycerol phosphate synthase subunit HisF, found in Moorella thermoacetica (strain ATCC 39073 / JCM 9320).